Here is a 691-residue protein sequence, read N- to C-terminus: Pre-mRNA-splicing factor CLF1 (691 aa).

16 HAT repeats span residues 52–84, 86–118, 120–152, 154–185, 187–218, 220–258, 260–294, 304–336, 338–372, 382–418, 420–451, 453–485, 487–521, 523–554, 574–612, and 617–650; these read EYQG…WELE, KEYA…AELK, RNIN…VEEM, GNIP…LEQR, GEYD…FEEE, GTSD…YEAK, HDLD…FEKQ, VVLS…LEEA, GDID…LWIF, KNPE…FEIR, GDLA…MEQK, YEFG…LERG, DDLD…FEEE, GEYD…FEIN, EAKA…FEKT, and EDIE…YIFP.

The protein belongs to the crooked-neck family. In terms of assembly, associated with the spliceosome.

Its subcellular location is the nucleus. Involved in pre-mRNA splicing and cell cycle progression. Required for the spliceosome assembly and initiation of the DNA replication. The chain is Pre-mRNA-splicing factor CLF1 (CLF1) from Pyricularia oryzae (strain 70-15 / ATCC MYA-4617 / FGSC 8958) (Rice blast fungus).